The chain runs to 83 residues: Kappa-theraphotoxin-Cg2a (83 aa).

Residues 1 to 21 (MKGSAFAIILGLVVLCACSFA) form the signal peptide. A propeptide spanning residues 22-53 (EDEQDQFASPNELLRSMFLESRHELIPEVEGR) is cleaved from the precursor. Intrachain disulfides connect C55/C69, C62/C74, and C68/C78. L82 is subject to Leucine amide.

Belongs to the neurotoxin 30 (phrixotoxin) family. Expressed by the venom gland.

It localises to the secreted. In terms of biological role, inhibits voltage-gated potassium channels of the subtype Kv4.1/KCND1 with high affinity and shows weak effects on Kv4.2/KCND2 and Kv2.1/KCNB1 subtypes. The toxin modifies the gating behavior of the channel and may interact with the S3-S4 extracellular loop. This is Kappa-theraphotoxin-Cg2a from Chilobrachys guangxiensis (Chinese earth tiger tarantula).